The chain runs to 356 residues: Cytochrome b translation regulator cbp7 (356 aa).

Component of a complex, at least composed of cbp7 and cbp8.

It is found in the mitochondrion. In terms of biological role, translation factor for cob1/cytochrome b; plays a role in cob1 mRNA stabilization and required for correct folding of the protein. This is Cytochrome b translation regulator cbp7 from Schizosaccharomyces pombe (strain 972 / ATCC 24843) (Fission yeast).